Consider the following 480-residue polypeptide: Endothelial transcription factor GATA-2 (480 aa).

At Ser-73 the chain carries Phosphoserine. Arg-86 carries the post-translational modification Asymmetric dimethylarginine. The tract at residues 166–208 (SGSHLFGFPPTPPKEVSPDPSTTGAASPASPSAGGSVARGEDK) is disordered. Over residues 183-201 (PDPSTTGAASPASPSAGGS) the composition is skewed to low complexity. Ser-192 carries the post-translational modification Phosphoserine. 2 consecutive GATA-type zinc fingers follow at residues 295–319 (CVNCGATATPLWRRDGTGHYLCNAC) and 349–373 (CANCQTTTTTLWRRNANGDPVCNAC). Lys-389 is covalently cross-linked (Glycyl lysine isopeptide (Lys-Gly) (interchain with G-Cter in SUMO2)). Positions 457–480 (TPIHPSSSLSFGHPHPSSMVTAMG) are disordered.

In terms of assembly, interacts with BRD3. Interacts with AR and CCAR1. Interacts with MDFIC.

It is found in the nucleus. Functionally, transcriptional activator which regulates endothelin-1 gene expression in endothelial cells. Binds to the consensus sequence 5'-AGATAG-3'. Plays an important role in the regulation of phagocytosis in alveolar macrophages, particularly during P.carinii infection. The chain is Endothelial transcription factor GATA-2 from Rattus norvegicus (Rat).